A 103-amino-acid polypeptide reads, in one-letter code: Secreted Ly-6/uPAR-related protein 1 (103 aa).

A signal peptide spans 1-22 (MASRWAVQLLLVAAWSMGCGEA). The region spanning 24 to 73 (KCYTCKEPMTSASCRTITRCKPEDTACMTTLVTVEAEYPFNQSPVVTRSC) is the UPAR/Ly6 domain. Disulfide bonds link C25/C50, C28/C37, C43/C73, C77/C93, and C94/C99.

In terms of assembly, homodimer. Interacts with PLAU. Interacts with CHRNA7. In terms of tissue distribution, granulocytes. Expressed in skin. Predominantly expressed in the granular layer of skin, notably the acrosyringium. Identified in several biological fluids such as sweat, saliva, tears, plasma and urine.

Its subcellular location is the secreted. Has an antitumor activity. Was found to be a marker of late differentiation of the skin. Implicated in maintaining the physiological and structural integrity of the keratinocyte layers of the skin. In vitro down-regulates keratinocyte proliferation; the function may involve the proposed role as modulator of nicotinic acetylcholine receptors (nAChRs) activity. In vitro inhibits alpha-7-dependent nAChR currents in an allosteric manner. In T cells may be involved in regulation of intracellular Ca(2+) signaling. Seems to have an immunomodulatory function in the cornea. The function may implicate a possible role as a scavenger receptor for PLAU thereby blocking PLAU-dependent functions of PLAUR such as in cell migration and proliferation. This chain is Secreted Ly-6/uPAR-related protein 1 (SLURP1), found in Homo sapiens (Human).